Reading from the N-terminus, the 222-residue chain is N-(5'-phosphoribosyl)anthranilate isomerase (222 aa).

It belongs to the TrpF family.

The catalysed reaction is N-(5-phospho-beta-D-ribosyl)anthranilate = 1-(2-carboxyphenylamino)-1-deoxy-D-ribulose 5-phosphate. It functions in the pathway amino-acid biosynthesis; L-tryptophan biosynthesis; L-tryptophan from chorismate: step 3/5. The protein is N-(5'-phosphoribosyl)anthranilate isomerase of Symbiobacterium thermophilum (strain DSM 24528 / JCM 14929 / IAM 14863 / T).